The primary structure comprises 393 residues: Sedoheptulose-1,7-bisphosphatase, chloroplastic (393 aa).

Residues Cys-115 and Cys-120 are joined by a disulfide bond. Residues Asp-126, Glu-155, Asp-176, Leu-178, and Asp-179 each coordinate Mg(2+). Substrate-binding positions include 179-182, Tyr-290, and Lys-320; that span reads DGSS. Residue Glu-326 coordinates Mg(2+).

It belongs to the FBPase class 1 family. Homodimer. Mg(2+) is required as a cofactor.

The protein resides in the plastid. Its subcellular location is the chloroplast. It carries out the reaction D-sedoheptulose 1,7-bisphosphate + H2O = D-sedoheptulose 7-phosphate + phosphate. It participates in carbohydrate biosynthesis; Calvin cycle. This is Sedoheptulose-1,7-bisphosphatase, chloroplastic from Triticum aestivum (Wheat).